The chain runs to 138 residues: Transcription antitermination protein NusB (138 aa).

It belongs to the NusB family.

Functionally, involved in transcription antitermination. Required for transcription of ribosomal RNA (rRNA) genes. Binds specifically to the boxA antiterminator sequence of the ribosomal RNA (rrn) operons. The sequence is that of Transcription antitermination protein NusB from Serratia proteamaculans (strain 568).